A 428-amino-acid polypeptide reads, in one-letter code: D-inositol 3-phosphate glycosyltransferase (428 aa).

His-17 serves as a coordination point for 1D-myo-inositol 3-phosphate. UDP-N-acetyl-alpha-D-glucosamine contacts are provided by residues 23-24 (QP) and Gly-31. 1D-myo-inositol 3-phosphate is bound by residues 28–33 (DAGGMN), Arg-86, Tyr-119, Thr-143, and Arg-163. Residues Arg-237 and Lys-242 each coordinate UDP-N-acetyl-alpha-D-glucosamine. 3 residues coordinate Mg(2+): Tyr-312, Arg-313, and Ala-315. UDP-N-acetyl-alpha-D-glucosamine contacts are provided by Glu-325 and Glu-333. Mg(2+) is bound at residue Thr-339.

The protein belongs to the glycosyltransferase group 1 family. MshA subfamily. As to quaternary structure, homodimer.

The catalysed reaction is 1D-myo-inositol 3-phosphate + UDP-N-acetyl-alpha-D-glucosamine = 1D-myo-inositol 2-acetamido-2-deoxy-alpha-D-glucopyranoside 3-phosphate + UDP + H(+). In terms of biological role, catalyzes the transfer of a N-acetyl-glucosamine moiety to 1D-myo-inositol 3-phosphate to produce 1D-myo-inositol 2-acetamido-2-deoxy-glucopyranoside 3-phosphate in the mycothiol biosynthesis pathway. The chain is D-inositol 3-phosphate glycosyltransferase from Thermobispora bispora (strain ATCC 19993 / DSM 43833 / CBS 139.67 / JCM 10125 / KCTC 9307 / NBRC 14880 / R51).